The following is a 51-amino-acid chain: Large ribosomal subunit protein bL33 (51 aa).

The disordered stretch occupies residues 1 to 20 (MRDKIRLNSSAGTGHFYTTD).

This sequence belongs to the bacterial ribosomal protein bL33 family.

The sequence is that of Large ribosomal subunit protein bL33 from Psychromonas ingrahamii (strain DSM 17664 / CCUG 51855 / 37).